A 200-amino-acid chain; its full sequence is Somatotropin (200 aa).

Residues 1-22 (MARVLVVLSVVVASLFFSQGAT) form the signal peptide. His-38 lines the Zn(2+) pocket. A disulfide bond links Cys-71 and Cys-173. A Zn(2+)-binding site is contributed by Glu-182. A disulfide bridge links Cys-190 with Cys-198.

Belongs to the somatotropin/prolactin family.

The protein localises to the secreted. In terms of biological role, growth hormone plays an important role in growth control and is involved in the regulation of several anabolic processes. Implicated as an osmoregulatory substance important for seawater adaptation. The protein is Somatotropin (gh) of Heteropneustes fossilis (Stinging catfish).